Consider the following 303-residue polypeptide: Quinolinate synthase (303 aa).

Iminosuccinate contacts are provided by H23 and S40. C85 contributes to the [4Fe-4S] cluster binding site. Residues 111 to 113 and S128 contribute to the iminosuccinate site; that span reads YIN. A [4Fe-4S] cluster-binding site is contributed by C171. Iminosuccinate-binding positions include 197–199 and T214; that span reads HPE. C259 contributes to the [4Fe-4S] cluster binding site.

It belongs to the quinolinate synthase family. Type 2 subfamily. The cofactor is [4Fe-4S] cluster.

The protein resides in the cytoplasm. It catalyses the reaction iminosuccinate + dihydroxyacetone phosphate = quinolinate + phosphate + 2 H2O + H(+). The protein operates within cofactor biosynthesis; NAD(+) biosynthesis; quinolinate from iminoaspartate: step 1/1. Catalyzes the condensation of iminoaspartate with dihydroxyacetone phosphate to form quinolinate. This Clostridium acetobutylicum (strain ATCC 824 / DSM 792 / JCM 1419 / IAM 19013 / LMG 5710 / NBRC 13948 / NRRL B-527 / VKM B-1787 / 2291 / W) protein is Quinolinate synthase.